A 319-amino-acid chain; its full sequence is Biotin synthase (319 aa).

The 227-residue stretch at 41–267 (YKGNKVKVCS…TPDIMICGGR (227 aa)) folds into the Radical SAM core domain. Residues Cys-59, Cys-63, and Cys-66 each coordinate [4Fe-4S] cluster. Cys-192 lines the [2Fe-2S] cluster pocket.

It belongs to the radical SAM superfamily. Biotin synthase family. As to quaternary structure, homodimer. [4Fe-4S] cluster serves as cofactor. It depends on [2Fe-2S] cluster as a cofactor.

The enzyme catalyses (4R,5S)-dethiobiotin + (sulfur carrier)-SH + 2 reduced [2Fe-2S]-[ferredoxin] + 2 S-adenosyl-L-methionine = (sulfur carrier)-H + biotin + 2 5'-deoxyadenosine + 2 L-methionine + 2 oxidized [2Fe-2S]-[ferredoxin]. It functions in the pathway cofactor biosynthesis; biotin biosynthesis; biotin from 7,8-diaminononanoate: step 2/2. Its function is as follows. Catalyzes the conversion of dethiobiotin (DTB) to biotin by the insertion of a sulfur atom into dethiobiotin via a radical-based mechanism. This Endomicrobium trichonymphae protein is Biotin synthase.